Reading from the N-terminus, the 1396-residue chain is ATP-dependent helicase/nuclease subunit A (1396 aa).

The tract at residues Met-1–Asp-25 is disordered. The 507-residue stretch at Pro-26 to Arg-532 folds into the UvrD-like helicase ATP-binding domain. Ala-47–Thr-54 lines the ATP pocket. Disordered stretches follow at residues Asp-590–Thr-649 and His-1171–Asp-1205. The region spanning His-615–Gly-920 is the UvrD-like helicase C-terminal domain. Low complexity predominate over residues Thr-1181–Thr-1199.

This sequence belongs to the helicase family. AddA subfamily. As to quaternary structure, heterodimer of AddA and AddB/RexB. Mg(2+) serves as cofactor.

The enzyme catalyses Couples ATP hydrolysis with the unwinding of duplex DNA by translocating in the 3'-5' direction.. It catalyses the reaction ATP + H2O = ADP + phosphate + H(+). Its function is as follows. The heterodimer acts as both an ATP-dependent DNA helicase and an ATP-dependent, dual-direction single-stranded exonuclease. Recognizes the chi site generating a DNA molecule suitable for the initiation of homologous recombination. The AddA nuclease domain is required for chi fragment generation; this subunit has the helicase and 3' -&gt; 5' nuclease activities. This Heliobacterium modesticaldum (strain ATCC 51547 / Ice1) protein is ATP-dependent helicase/nuclease subunit A.